Reading from the N-terminus, the 183-residue chain is DNA-directed RNA polymerase subunit Rpo7 (183 aa).

Residues 82–164 (HEVIEGEVSQ…RLPRIALTMK (83 aa)) enclose the S1 motif domain.

The protein belongs to the eukaryotic RPB7/RPC8 RNA polymerase subunit family. Part of the 13-subunit RNA polymerase complex. Forms a stalk with Rpo4 that extends from the main structure.

It is found in the cytoplasm. The catalysed reaction is RNA(n) + a ribonucleoside 5'-triphosphate = RNA(n+1) + diphosphate. Functionally, DNA-dependent RNA polymerase (RNAP) catalyzes the transcription of DNA into RNA using the four ribonucleoside triphosphates as substrates. Its function is as follows. Reconstitution experiments show this subunit is required for basic activity. The protein is DNA-directed RNA polymerase subunit Rpo7 of Sulfolobus acidocaldarius (strain ATCC 33909 / DSM 639 / JCM 8929 / NBRC 15157 / NCIMB 11770).